Reading from the N-terminus, the 495-residue chain is Carotenoid 3,4-desaturase (495 aa).

The protein belongs to the carotenoid/retinoid oxidoreductase family.

It carries out the reaction dihydroisopentenyldehydrorhodopin + A = isopentenyldehydrorhodopin + AH2. It catalyses the reaction dihydrobisanhydrobacterioruberin + A = bisanhydrobacterioruberin + AH2. It functions in the pathway carotenoid biosynthesis. Involved in the biosynthesis of the acyclic C50 carotenoid bacterioruberin (BR). CrtD is involved in the desaturation reactions that form double bonds at C-3,4 of dihydroisopentenyldehydrorhodopin (DH-IDR) and C-3',4' of dihydrobisanhydrobacterioruberin (DH-BABR) to yield isopentenyld ehydrorhodopin (IDR) and bisanhydrobacterioruberin (BABR), respectively. This chain is Carotenoid 3,4-desaturase, found in Haloarcula japonica (strain ATCC 49778 / DSM 6131 / JCM 7785 / NBRC 101032 / NCIMB 13157 / TR-1).